Reading from the N-terminus, the 34-residue chain is ALWKDVLKKIGTVALHAGKAAFGAAADTISQGGS.

Expressed by the skin glands.

The protein localises to the secreted. Functionally, has antimicrobial activity. The polypeptide is Dermaseptin-H5 (Pithecopus hypochondrialis (Orange-legged leaf frog)).